We begin with the raw amino-acid sequence, 37 residues long: Large ribosomal subunit protein bL36 (37 aa).

The protein belongs to the bacterial ribosomal protein bL36 family.

The chain is Large ribosomal subunit protein bL36 (rpmJ) from Mycobacterium tuberculosis (strain ATCC 25618 / H37Rv).